Here is a 288-residue protein sequence, read N- to C-terminus: Small ribosomal subunit protein uS2 (288 aa).

The segment at glutamate 267–phenylalanine 288 is disordered.

The protein belongs to the universal ribosomal protein uS2 family.

This Petrotoga mobilis (strain DSM 10674 / SJ95) protein is Small ribosomal subunit protein uS2.